Reading from the N-terminus, the 181-residue chain is Probable pyruvoyl-dependent arginine decarboxylase (181 aa).

Position 43 is a pyruvic acid (Ser) (serine 43).

This sequence belongs to the PdaD family. It depends on pyruvate as a cofactor.

The catalysed reaction is L-arginine + H(+) = agmatine + CO2. This Chlorobium limicola (strain DSM 245 / NBRC 103803 / 6330) protein is Probable pyruvoyl-dependent arginine decarboxylase.